The sequence spans 353 residues: C-C chemokine receptor type 8 (353 aa).

The Extracellular segment spans residues 1 to 33; it reads MDYTMEPNVTMTDYYPDFFTAPCDAEFLLRGSM. Residue Asn8 is glycosylated (N-linked (GlcNAc...) asparagine). A helical transmembrane segment spans residues 34–61; that stretch reads LYLAILYCVLFVLGLLGNSLVILVLVGC. Residues 62–71 are Cytoplasmic-facing; sequence KKLRSITDIY. The helical transmembrane segment at 72–91 threads the bilayer; it reads LLNLAASDLLFVLSIPFQTH. The Extracellular portion of the chain corresponds to 92–105; the sequence is NLLDQWVFGTAMCK. Cys104 and Cys181 are joined by a disulfide. A helical transmembrane segment spans residues 106–127; sequence VVSGLYYIGFFSSMFFITLMSV. Topologically, residues 128-144 are cytoplasmic; the sequence is DRYLAIVHAVYAIKVRT. A helical membrane pass occupies residues 145-169; that stretch reads ASVGTALSLTVWLAAVTATIPLMVF. Residues 170-200 lie on the Extracellular side of the membrane; it reads YQVASEDGMLQCFQFYEEQSLRWKLFTHFEI. A helical transmembrane segment spans residues 201-220; the sequence is NALGLLLPFAILLFCYVRIL. The Cytoplasmic portion of the chain corresponds to 221–236; that stretch reads QQLRGCLNHNRTRAIK. The helical transmembrane segment at 237–261 threads the bilayer; that stretch reads LVLTVVIVSLLFWVPFNVALFLTSL. The Extracellular segment spans residues 262-278; the sequence is HDLHILDGCATRQRLAL. A helical transmembrane segment spans residues 279–302; that stretch reads AIHVTEVISFTHCCVNPVIYAFIG. At 303–353 the chain is on the cytoplasmic side; that stretch reads EKFKKHLMDVFQKSCSHIFLYLGRQMPVGALERQLSSNQRSSHSSTLDDIL.

The protein belongs to the G-protein coupled receptor 1 family. In terms of tissue distribution, expressed in thymus.

Its subcellular location is the cell membrane. Its function is as follows. Receptor for the CCL1/SCY1/TCA-3 chemokine. This chain is C-C chemokine receptor type 8 (Ccr8), found in Mus musculus (Mouse).